A 525-amino-acid chain; its full sequence is 2-isopropylmalate synthase (525 aa).

Residues 12 to 274 enclose the Pyruvate carboxyltransferase domain; that stretch reads VVIFDTTLRD…WNKIDTTQLT (263 aa). The Mn(2+) site is built by Asp-21, His-209, His-211, and Asn-245. Residues 398–525 form a regulatory domain region; that stretch reads KLLSLSVIAG…GHGASAAAAS (128 aa).

Belongs to the alpha-IPM synthase/homocitrate synthase family. LeuA type 1 subfamily. As to quaternary structure, homodimer. It depends on Mn(2+) as a cofactor.

The protein resides in the cytoplasm. The enzyme catalyses 3-methyl-2-oxobutanoate + acetyl-CoA + H2O = (2S)-2-isopropylmalate + CoA + H(+). The protein operates within amino-acid biosynthesis; L-leucine biosynthesis; L-leucine from 3-methyl-2-oxobutanoate: step 1/4. Functionally, catalyzes the condensation of the acetyl group of acetyl-CoA with 3-methyl-2-oxobutanoate (2-ketoisovalerate) to form 3-carboxy-3-hydroxy-4-methylpentanoate (2-isopropylmalate). This Bradyrhizobium sp. (strain ORS 278) protein is 2-isopropylmalate synthase.